Here is a 115-residue protein sequence, read N- to C-terminus: Cell division topological specificity factor (115 aa).

The segment at 93-115 (QLKEPKNQSELDSPETEGTDQKS) is disordered. Residues 104-115 (DSPETEGTDQKS) are compositionally biased toward acidic residues.

Belongs to the MinE family.

Prevents the cell division inhibition by proteins MinC and MinD at internal division sites while permitting inhibition at polar sites. This ensures cell division at the proper site by restricting the formation of a division septum at the midpoint of the long axis of the cell. In Prochlorococcus marinus (strain NATL1A), this protein is Cell division topological specificity factor.